The following is a 173-amino-acid chain: Ribosome maturation factor RimM (173 aa).

The PRC barrel domain maps to 93-166 (EDEYLVSDMI…KMLVDTIEGM (74 aa)).

This sequence belongs to the RimM family. In terms of assembly, binds ribosomal protein uS19.

The protein localises to the cytoplasm. An accessory protein needed during the final step in the assembly of 30S ribosomal subunit, possibly for assembly of the head region. Essential for efficient processing of 16S rRNA. May be needed both before and after RbfA during the maturation of 16S rRNA. It has affinity for free ribosomal 30S subunits but not for 70S ribosomes. The sequence is that of Ribosome maturation factor RimM from Fusobacterium nucleatum subsp. nucleatum (strain ATCC 25586 / DSM 15643 / BCRC 10681 / CIP 101130 / JCM 8532 / KCTC 2640 / LMG 13131 / VPI 4355).